Reading from the N-terminus, the 124-residue chain is Small ribosomal subunit protein uS12 (124 aa).

The residue at position 89 (Asp89) is a 3-methylthioaspartic acid.

Belongs to the universal ribosomal protein uS12 family. As to quaternary structure, part of the 30S ribosomal subunit. Contacts proteins S8 and S17. May interact with IF1 in the 30S initiation complex.

Its function is as follows. With S4 and S5 plays an important role in translational accuracy. Functionally, interacts with and stabilizes bases of the 16S rRNA that are involved in tRNA selection in the A site and with the mRNA backbone. Located at the interface of the 30S and 50S subunits, it traverses the body of the 30S subunit contacting proteins on the other side and probably holding the rRNA structure together. The combined cluster of proteins S8, S12 and S17 appears to hold together the shoulder and platform of the 30S subunit. In Glaesserella parasuis serovar 5 (strain SH0165) (Haemophilus parasuis), this protein is Small ribosomal subunit protein uS12.